The sequence spans 381 residues: GDP-mannose-dependent alpha-(1-6)-phosphatidylinositol dimannoside mannosyltransferase (381 aa).

Residues glycine 16, arginine 207, 211–212 (EK), 283–287 (ETFGL), and glutamate 291 each bind substrate.

The protein belongs to the glycosyltransferase group 1 family. Glycosyltransferase 4 subfamily.

It functions in the pathway phospholipid metabolism; phosphatidylinositol metabolism. In terms of biological role, catalyzes the addition of a mannose residue from GDP-D-mannose to the position 6 of the alpha-1,6-linked mannose residue of the triacyl phosphatidylinositol dimannoside (Ac3PIM2) to generate triacyl phosphatidylinositol trimannoside (Ac3PIM3). This is GDP-mannose-dependent alpha-(1-6)-phosphatidylinositol dimannoside mannosyltransferase (pimC) from Mycobacterium tuberculosis (strain ATCC 25177 / H37Ra).